The chain runs to 278 residues: Orotidine 5'-phosphate decarboxylase (278 aa).

Substrate contacts are provided by residues aspartate 40, lysine 65–histidine 67, aspartate 96–threonine 105, tyrosine 230, and arginine 248. Lysine 98 functions as the Proton donor in the catalytic mechanism.

The protein belongs to the OMP decarboxylase family.

It catalyses the reaction orotidine 5'-phosphate + H(+) = UMP + CO2. It participates in pyrimidine metabolism; UMP biosynthesis via de novo pathway; UMP from orotate: step 2/2. In Penicillium chrysogenum (Penicillium notatum), this protein is Orotidine 5'-phosphate decarboxylase (pyrG).